The chain runs to 296 residues: tRNA-cytidine(32) 2-sulfurtransferase (296 aa).

Residues 72 to 77 (SGGKDS) carry the PP-loop motif motif. Residues C147, C150, and C238 each coordinate [4Fe-4S] cluster.

The protein belongs to the TtcA family. In terms of assembly, homodimer. Mg(2+) is required as a cofactor. It depends on [4Fe-4S] cluster as a cofactor.

The protein localises to the cytoplasm. It catalyses the reaction cytidine(32) in tRNA + S-sulfanyl-L-cysteinyl-[cysteine desulfurase] + AH2 + ATP = 2-thiocytidine(32) in tRNA + L-cysteinyl-[cysteine desulfurase] + A + AMP + diphosphate + H(+). It functions in the pathway tRNA modification. In terms of biological role, catalyzes the ATP-dependent 2-thiolation of cytidine in position 32 of tRNA, to form 2-thiocytidine (s(2)C32). The sulfur atoms are provided by the cysteine/cysteine desulfurase (IscS) system. The polypeptide is tRNA-cytidine(32) 2-sulfurtransferase (Sinorhizobium fredii (strain NBRC 101917 / NGR234)).